Here is a 129-residue protein sequence, read N- to C-terminus: Azurin-1 (129 aa).

The region spanning 1–129 (AECSVDIAGN…LMKGVLKLVD (129 aa)) is the Plastocyanin-like domain. The cysteines at positions 3 and 26 are disulfide-linked. Positions 46, 112, 117, and 121 each coordinate Cu cation.

Its subcellular location is the periplasm. Its function is as follows. Transfers electrons from cytochrome c551 to cytochrome oxidase. The polypeptide is Azurin-1 (Alcaligenes xylosoxydans xylosoxydans (Achromobacter xylosoxidans)).